The primary structure comprises 164 residues: Large ribosomal subunit protein uL15 (164 aa).

Positions 1–52 are disordered; the sequence is MSLSKLKAPKGANRERTRVGRGQGSGLGKTAGRGGKGQKARSGNMHFEGFEG. A compositionally biased stretch (gly residues) spans 21-37; that stretch reads RGQGSGLGKTAGRGGKG.

The protein belongs to the universal ribosomal protein uL15 family. Part of the 50S ribosomal subunit.

Binds to the 23S rRNA. The protein is Large ribosomal subunit protein uL15 of Anaeromyxobacter sp. (strain Fw109-5).